A 370-amino-acid polypeptide reads, in one-letter code: Flagellar P-ring protein 1 (370 aa).

An N-terminal signal peptide occupies residues 1–25 (MSVLIKTRHCFVLLGLWLVLPTASA).

It belongs to the FlgI family. As to quaternary structure, the basal body constitutes a major portion of the flagellar organelle and consists of four rings (L,P,S, and M) mounted on a central rod.

It localises to the periplasm. The protein localises to the bacterial flagellum basal body. Functionally, assembles around the rod to form the L-ring and probably protects the motor/basal body from shearing forces during rotation. The chain is Flagellar P-ring protein 1 from Yersinia pestis.